The chain runs to 112 residues: Colipase (112 aa).

Residues 1–17 (MEKILILLLVALSVAYA) form the signal peptide. Positions 18–22 (APGPR) are cleaved as a propeptide — enterostatin, activation peptide. 5 disulfide bridges follow: Cys34/Cys45, Cys40/Cys56, Cys44/Cys78, Cys66/Cys86, and Cys80/Cys104.

This sequence belongs to the colipase family. Forms a 1:1 stoichiometric complex with pancreatic lipase. In terms of tissue distribution, expressed by the pancreas.

It localises to the secreted. Colipase is a cofactor of pancreatic lipase. It allows the lipase to anchor itself to the lipid-water interface. Without colipase the enzyme is washed off by bile salts, which have an inhibitory effect on the lipase. In terms of biological role, enterostatin has a biological activity as a satiety signal. This Homo sapiens (Human) protein is Colipase.